Reading from the N-terminus, the 415-residue chain is Serine/threonine transporter SstT (415 aa).

Helical transmembrane passes span 21–41 (ILLGLAAGIILASLSTQAALA), 45–65 (LGTLFVGALKAVAPILVLMLV), 83–103 (ILFLYLIGTFSAALIAVVLSV), 142–162 (ALLNANYIGILVWAVGLGLAF), 193–213 (LGIFGLVASTLAETGFGALWG), 217–237 (LLMVLIGGMLLVALVINPLIV), 299–319 (MAGAAITITVLALAAVHTLGI), 331–351 (VVASICACGASGVAGGSLLLI), and 358–378 (FGISNDIAMQVVAVGFIIGVL).

Belongs to the dicarboxylate/amino acid:cation symporter (DAACS) (TC 2.A.23) family.

Its subcellular location is the cell inner membrane. The enzyme catalyses L-serine(in) + Na(+)(in) = L-serine(out) + Na(+)(out). It carries out the reaction L-threonine(in) + Na(+)(in) = L-threonine(out) + Na(+)(out). In terms of biological role, involved in the import of serine and threonine into the cell, with the concomitant import of sodium (symport system). In Pectobacterium carotovorum subsp. carotovorum (strain PC1), this protein is Serine/threonine transporter SstT.